We begin with the raw amino-acid sequence, 307 residues long: Ribosomal RNA small subunit methyltransferase H (307 aa).

S-adenosyl-L-methionine contacts are provided by residues 32 to 34 (GGH), aspartate 52, phenylalanine 78, aspartate 100, and glutamine 107.

It belongs to the methyltransferase superfamily. RsmH family.

The protein localises to the cytoplasm. The catalysed reaction is cytidine(1402) in 16S rRNA + S-adenosyl-L-methionine = N(4)-methylcytidine(1402) in 16S rRNA + S-adenosyl-L-homocysteine + H(+). Specifically methylates the N4 position of cytidine in position 1402 (C1402) of 16S rRNA. The protein is Ribosomal RNA small subunit methyltransferase H of Coxiella burnetii (strain CbuK_Q154) (Coxiella burnetii (strain Q154)).